A 131-amino-acid chain; its full sequence is D-ribose pyranase (131 aa).

Catalysis depends on His20, which acts as the Proton donor. Residues Asp28, His98, and 120-122 (YAN) each bind substrate.

It belongs to the RbsD / FucU family. RbsD subfamily. In terms of assembly, homodecamer.

The protein localises to the cytoplasm. It catalyses the reaction beta-D-ribopyranose = beta-D-ribofuranose. It participates in carbohydrate metabolism; D-ribose degradation; D-ribose 5-phosphate from beta-D-ribopyranose: step 1/2. Its function is as follows. Catalyzes the interconversion of beta-pyran and beta-furan forms of D-ribose. The polypeptide is D-ribose pyranase (Clostridium novyi (strain NT)).